We begin with the raw amino-acid sequence, 607 residues long: Elongation factor 4 (607 aa).

One can recognise a tr-type G domain in the interval 11–193; it reads KNIRNFSIIA…KIVEVVPPPE (183 aa). GTP is bound by residues 23-28 and 140-143; these read DHGKST and NKID.

The protein belongs to the TRAFAC class translation factor GTPase superfamily. Classic translation factor GTPase family. LepA subfamily.

The protein resides in the cell membrane. The catalysed reaction is GTP + H2O = GDP + phosphate + H(+). Functionally, required for accurate and efficient protein synthesis under certain stress conditions. May act as a fidelity factor of the translation reaction, by catalyzing a one-codon backward translocation of tRNAs on improperly translocated ribosomes. Back-translocation proceeds from a post-translocation (POST) complex to a pre-translocation (PRE) complex, thus giving elongation factor G a second chance to translocate the tRNAs correctly. Binds to ribosomes in a GTP-dependent manner. This is Elongation factor 4 from Staphylococcus saprophyticus subsp. saprophyticus (strain ATCC 15305 / DSM 20229 / NCIMB 8711 / NCTC 7292 / S-41).